We begin with the raw amino-acid sequence, 290 residues long: Endoplasmic reticulum-Golgi intermediate compartment protein 1 (290 aa).

Residues 1 to 26 lie on the Cytoplasmic side of the membrane; that stretch reads MPFDFRRFDIYRKVPKDLTQPTYTGA. A helical membrane pass occupies residues 27 to 47; it reads IISICCCLFITFLFLSELTGF. At 48-254 the chain is on the lumenal side; it reads IANEIVNELY…RRQPMYRFIT (207 aa). N74 carries an N-linked (GlcNAc...) asparagine glycan. Residues 255–275 form a helical membrane-spanning segment; that stretch reads TVCAIIGGTFTVAGILDSFIF. Residues 276–290 are Cytoplasmic-facing; that stretch reads TASEAWKKIQLGKMQ.

It belongs to the ERGIC family.

The protein resides in the endoplasmic reticulum membrane. Its subcellular location is the endoplasmic reticulum-Golgi intermediate compartment membrane. It localises to the golgi apparatus membrane. Functionally, possible role in transport between endoplasmic reticulum and Golgi. This Xenopus laevis (African clawed frog) protein is Endoplasmic reticulum-Golgi intermediate compartment protein 1 (ergic1).